The primary structure comprises 219 residues: Ras-related protein Rab-3B (219 aa).

A2 bears the N-acetylalanine mark. GTP-binding residues include S31, S32, V33, G34, K35, T36, S37, P49, and S53. Mg(2+) is bound at residue T36. The Switch 1 motif lies at 45–58 (DTFTPAFVSTVGID). The Mg(2+) site is built by T54 and D77. Residues 78 to 96 (TAGQERYRTITTAYYRGAM) carry the Switch 2 motif. G80 serves as a coordination point for GTP. T86 carries the post-translational modification Phosphothreonine. Residues N135, K136, D138, A166, and K167 each coordinate GTP. Phosphoserine is present on residues S188 and S190. Residues C217 and C219 are each lipidated (S-geranylgeranyl cysteine). Cysteine methyl ester is present on C219.

This sequence belongs to the small GTPase superfamily. Rab family. As to quaternary structure, interacts with RPH3A and RPH3AL. Interacts with RIMS1. Interacts with RIMS2. The GTP-bound form interacts with GAS8/DRC4 (via coiled-coil domains). Interacts with GDI2, and CHM; phosphorylation at Thr-86 disrupts these interactions. Interacts with MADD (via uDENN domain); the GTP-bound form is preferred for interaction. Mg(2+) is required as a cofactor. Phosphorylation of Thr-86 in the switch II region by LRRK2 prevents the association of RAB regulatory proteins, including CHM and RAB GDP dissociation inhibitor GDI2.

Its subcellular location is the cell membrane. The protein localises to the golgi apparatus. It catalyses the reaction GTP + H2O = GDP + phosphate + H(+). With respect to regulation, regulated by guanine nucleotide exchange factors (GEFs) which promote the exchange of bound GDP for free GTP. Regulated by GTPase activating proteins (GAPs) which increase the GTP hydrolysis activity. Inhibited by GDP dissociation inhibitors (GDIs) which prevent Rab-GDP dissociation. In terms of biological role, the small GTPases Rab are key regulators of intracellular membrane trafficking, from the formation of transport vesicles to their fusion with membranes. Rabs cycle between an inactive GDP-bound form and an active GTP-bound form that is able to recruit to membranes different sets of downstream effectors directly responsible for vesicle formation, movement, tethering and fusion. The sequence is that of Ras-related protein Rab-3B from Rattus norvegicus (Rat).